Here is a 104-residue protein sequence, read N- to C-terminus: Large ribosomal subunit protein uL24 (104 aa).

Belongs to the universal ribosomal protein uL24 family. In terms of assembly, part of the 50S ribosomal subunit.

In terms of biological role, one of two assembly initiator proteins, it binds directly to the 5'-end of the 23S rRNA, where it nucleates assembly of the 50S subunit. One of the proteins that surrounds the polypeptide exit tunnel on the outside of the subunit. This chain is Large ribosomal subunit protein uL24, found in Serratia proteamaculans (strain 568).